The primary structure comprises 961 residues: Probable exosome complex exonuclease RRP44 (961 aa).

The 116-residue stretch at 73 to 188 (HALIVDSTSL…LVFDEDSKKR (116 aa)) folds into the PINc domain. Residues 232–338 (IFDEYLSHDR…DEENDDENDE (107 aa)) enclose the CSD1 domain. Residues 322-346 (ADDMGNEDEENDDENDEPKAKKSKK) form a disordered region. Positions 325 to 337 (MGNEDEENDDEND) are enriched in acidic residues. The region spanning 381-447 (LFCPAERLIP…ENEVLLLEHD (67 aa)) is the CSD2 domain. The region spanning 479–809 (RVDLRDLTIC…IVHRLLAAAI (331 aa)) is the RNB domain.

This sequence belongs to the RNR ribonuclease family. As to quaternary structure, component of the RNA exosome complex. Ubiquitously expressed.

The protein resides in the nucleus. The protein localises to the nucleoplasm. Putative catalytic component of the RNA exosome complex which has 3'-&gt;5' exoribonuclease activity and participates in a multitude of cellular RNA processing and degradation events. Has both 3'-5' exonuclease and endonuclease activities. Involved in regulation of antisense ribosomal siRNA production. This is Probable exosome complex exonuclease RRP44 (dis-3) from Caenorhabditis elegans.